We begin with the raw amino-acid sequence, 1138 residues long: Pesticidal crystal protein Cry7Aa (1138 aa).

It belongs to the delta endotoxin family.

In terms of biological role, promotes colloidosmotic lysis by binding to the midgut epithelial cells of Coleoptera. This protein is not toxic in its natural form. It is highly toxic to Colorado potato beetle larvae after an in vitro solubilization and trypsin activation step. This is Pesticidal crystal protein Cry7Aa (cry7Aa) from Bacillus thuringiensis.